The chain runs to 422 residues: Exopolygalacturonase clone GBGE184 (422 aa).

Residues 1-31 (MANARSLVAKANNINVGSLILMALVFGSCVA) form the signal peptide. 5 PbH1 repeats span residues 200–226 (TENV…HLSN), 227–248 (ADNV…SVGR), 250–270 (SNNV…SVGS), 280–301 (VSGI…RIKT), and 310–331 (AVDI…IIDQ). N-linked (GlcNAc...) asparagine glycosylation occurs at Asn229. Asp241 (proton donor) is an active-site residue. Cysteines 243 and 260 form a disulfide. N-linked (GlcNAc...) asparagine glycosylation occurs at Asn252. Residue His264 is part of the active site. A glycan (N-linked (GlcNAc...) asparagine) is linked at Asn287. Intrachain disulfides connect Cys366/Cys372 and Cys404/Cys420.

This sequence belongs to the glycosyl hydrolase 28 family.

The protein localises to the secreted. The protein resides in the cell wall. The enzyme catalyses [(1-&gt;4)-alpha-D-galacturonosyl](n) + H2O = alpha-D-galacturonate + [(1-&gt;4)-alpha-D-galacturonosyl](n-1). In terms of biological role, may function in depolymerizing pectin during pollen development, germination, and tube growth. Acts as an exo-polygalacturonase. This is Exopolygalacturonase clone GBGE184 (PGA3) from Arabidopsis thaliana (Mouse-ear cress).